Here is a 352-residue protein sequence, read N- to C-terminus: N-acetyl-gamma-glutamyl-phosphate reductase (352 aa).

Cys158 is a catalytic residue.

This sequence belongs to the NAGSA dehydrogenase family. Type 1 subfamily.

It is found in the cytoplasm. It catalyses the reaction N-acetyl-L-glutamate 5-semialdehyde + phosphate + NADP(+) = N-acetyl-L-glutamyl 5-phosphate + NADPH + H(+). Its pathway is amino-acid biosynthesis; L-arginine biosynthesis; N(2)-acetyl-L-ornithine from L-glutamate: step 3/4. In terms of biological role, catalyzes the NADPH-dependent reduction of N-acetyl-5-glutamyl phosphate to yield N-acetyl-L-glutamate 5-semialdehyde. This is N-acetyl-gamma-glutamyl-phosphate reductase from Mycobacterium bovis (strain BCG / Tokyo 172 / ATCC 35737 / TMC 1019).